Reading from the N-terminus, the 642-residue chain is Threonine--tRNA ligase (642 aa).

The TGS domain occupies 1–61 (MPVITLPDGS…VDDASVAIIT (61 aa)). Residues 243–534 (DHRKIGKQLD…LTEEYAGFFP (292 aa)) are catalytic. The Zn(2+) site is built by cysteine 334, histidine 385, and histidine 511.

Belongs to the class-II aminoacyl-tRNA synthetase family. Homodimer. It depends on Zn(2+) as a cofactor.

The protein localises to the cytoplasm. The enzyme catalyses tRNA(Thr) + L-threonine + ATP = L-threonyl-tRNA(Thr) + AMP + diphosphate + H(+). In terms of biological role, catalyzes the attachment of threonine to tRNA(Thr) in a two-step reaction: L-threonine is first activated by ATP to form Thr-AMP and then transferred to the acceptor end of tRNA(Thr). Also edits incorrectly charged L-seryl-tRNA(Thr). This is Threonine--tRNA ligase from Erwinia tasmaniensis (strain DSM 17950 / CFBP 7177 / CIP 109463 / NCPPB 4357 / Et1/99).